The sequence spans 812 residues: Axin-2 (812 aa).

Positions 1–43 (MNRTLTDPMVSSFREDDPRPPVPGEEGETTCHHPSKLAMMRPK) are disordered. An RGS domain is found at 84 to 203 (SLHFLLGDQD…LTSDIYLEYV (120 aa)). Disordered regions lie at residues 275–326 (SYRR…AIPP), 388–430 (ETMS…TCEE), 446–484 (TPGCQSPGLLRHSPRSRSPEQRPLPRGGLSTRSQSSSMN), and 609–726 (RQTK…SGCH). A compositionally biased stretch (polar residues) spans 285–303 (NRFTSGYSFAPATSANDSE). Residues 305–323 (SSDALTDDSMSMTDSSVDA) are compositionally biased toward low complexity. Positions 329–415 (LGSKKQLQRE…RDESEMSSSS (87 aa)) are interaction with GSK3B. The segment covering 388–397 (ETMSSLEERL) has biased composition (basic and acidic residues). Residues 401-410 (QEEEERDESE) are compositionally biased toward acidic residues. Low complexity predominate over residues 411-421 (MSSSSASHSLP). Residues 415-467 (SASHSLPLLPPGTCEEDPQAILDEHLSRVLKTPGCQSPGLLRHSPRSRSPEQR) are interaction with beta-catenin. The segment covering 475–484 (STRSQSSSMN) has biased composition (polar residues). The span at 672-683 (EEARRRLEEVSK) shows a compositional bias: basic and acidic residues. Residues 730–812 (GSETVVTYFF…KILGKVDRMD (83 aa)) enclose the DIX domain.

As to quaternary structure, interacts with hwa; leading to promote the tankyrase-mediated degradation of axin1. ADP-ribosylated by tankyrase tnks and tnks2. Poly-ADP-ribosylated protein is recognized by rnf146, followed by ubiquitination and subsequent activation of the Wnt signaling pathway. In terms of processing, ubiquitinated by rnf146 when poly-ADP-ribosylated, leading to its degradation and subsequent activation of the Wnt signaling pathway.

The protein localises to the cytoplasm. Functionally, component of the beta-catenin destruction complex required for regulating ctnnb1 levels through phosphorylation and ubiquitination, and modulating Wnt-signaling. Controls dorsoventral patterning by down-regulating ctnnb1 to inhibit the Wnt signaling pathway and ventralize embryos. The protein is Axin-2 (axin2) of Danio rerio (Zebrafish).